A 124-amino-acid polypeptide reads, in one-letter code: Small ribosomal subunit protein uS12 (124 aa).

The disordered stretch occupies residues 1 to 22 (MATVNQLVRKPRKRKVAKSDVP). 3-methylthioaspartic acid is present on D89. The tract at residues 99–124 (RGSLDTSGVQNRKQGRSKYGTKRPKK) is disordered. Over residues 111–124 (KQGRSKYGTKRPKK) the composition is skewed to basic residues.

The protein belongs to the universal ribosomal protein uS12 family. In terms of assembly, part of the 30S ribosomal subunit. Contacts proteins S8 and S17. May interact with IF1 in the 30S initiation complex.

In terms of biological role, with S4 and S5 plays an important role in translational accuracy. Functionally, interacts with and stabilizes bases of the 16S rRNA that are involved in tRNA selection in the A site and with the mRNA backbone. Located at the interface of the 30S and 50S subunits, it traverses the body of the 30S subunit contacting proteins on the other side and probably holding the rRNA structure together. The combined cluster of proteins S8, S12 and S17 appears to hold together the shoulder and platform of the 30S subunit. This chain is Small ribosomal subunit protein uS12, found in Marinomonas sp. (strain MWYL1).